The sequence spans 828 residues: Molybdenum cofactor sulfurase (828 aa).

Residue Lys-239 is modified to N6-(pyridoxal phosphate)lysine. The active site involves Cys-402. A disordered region spans residues Thr-638–Pro-682. The MOSC domain occupies Ala-652 to Trp-825.

The protein belongs to the class-V pyridoxal-phosphate-dependent aminotransferase family. MOCOS subfamily. It depends on pyridoxal 5'-phosphate as a cofactor.

The catalysed reaction is Mo-molybdopterin + L-cysteine + AH2 = thio-Mo-molybdopterin + L-alanine + A + H2O. Sulfurates the molybdenum cofactor. Sulfation of molybdenum is essential for xanthine dehydrogenase (XDH) and aldehyde oxidase (ADO) enzymes in which molybdenum cofactor is liganded by 1 oxygen and 1 sulfur atom in active form. The protein is Molybdenum cofactor sulfurase of Aspergillus terreus (strain NIH 2624 / FGSC A1156).